The chain runs to 311 residues: Cytochrome f (311 aa).

The first 27 residues, 1-27 (MKHFFKSLTLAIALAASVLFWSPQAQA), serve as a signal peptide directing secretion. Residues Y28, C48, C51, and H52 each contribute to the heme site. Residues 279-296 (WLLVFFAAITLSQILLVL) form a helical membrane-spanning segment.

It belongs to the cytochrome f family. As to quaternary structure, the 4 large subunits of the cytochrome b6-f complex are cytochrome b6, subunit IV (17 kDa polypeptide, PetD), cytochrome f and the Rieske protein, while the 4 small subunits are PetG, PetL, PetM and PetN. The complex functions as a dimer. The cofactor is heme.

The protein localises to the cellular thylakoid membrane. Functionally, component of the cytochrome b6-f complex, which mediates electron transfer between photosystem II (PSII) and photosystem I (PSI), cyclic electron flow around PSI, and state transitions. The polypeptide is Cytochrome f (Synechococcus elongatus).